Here is a 130-residue protein sequence, read N- to C-terminus: Small ribosomal subunit protein uS11 (130 aa).

This sequence belongs to the universal ribosomal protein uS11 family. As to quaternary structure, part of the 30S ribosomal subunit. Interacts with proteins S7 and S18. Binds to IF-3.

Located on the platform of the 30S subunit, it bridges several disparate RNA helices of the 16S rRNA. Forms part of the Shine-Dalgarno cleft in the 70S ribosome. The protein is Small ribosomal subunit protein uS11 of Prochlorococcus marinus subsp. pastoris (strain CCMP1986 / NIES-2087 / MED4).